The sequence spans 688 residues: Elongation factor G (688 aa).

Residues 8 to 282 (EKTRNIGIIA…AVVDYLPAPC (275 aa)) enclose the tr-type G domain. GTP is bound by residues 17 to 24 (AHIDAGKT), 81 to 85 (DTPGH), and 135 to 138 (NKMD).

Belongs to the TRAFAC class translation factor GTPase superfamily. Classic translation factor GTPase family. EF-G/EF-2 subfamily.

Its subcellular location is the cytoplasm. Its function is as follows. Catalyzes the GTP-dependent ribosomal translocation step during translation elongation. During this step, the ribosome changes from the pre-translocational (PRE) to the post-translocational (POST) state as the newly formed A-site-bound peptidyl-tRNA and P-site-bound deacylated tRNA move to the P and E sites, respectively. Catalyzes the coordinated movement of the two tRNA molecules, the mRNA and conformational changes in the ribosome. This chain is Elongation factor G, found in Aster yellows witches'-broom phytoplasma (strain AYWB).